The primary structure comprises 168 residues: Phosphopantetheine adenylyltransferase (168 aa).

Substrate is bound at residue Thr10. ATP contacts are provided by residues 10-11 (TF) and His18. Residues Lys42, Leu75, and Arg89 each contribute to the substrate site. ATP is bound by residues 90 to 92 (GVR), Glu100, and 125 to 131 (YTYVASS).

It belongs to the bacterial CoaD family. Homohexamer. The cofactor is Mg(2+).

The protein localises to the cytoplasm. The catalysed reaction is (R)-4'-phosphopantetheine + ATP + H(+) = 3'-dephospho-CoA + diphosphate. It functions in the pathway cofactor biosynthesis; coenzyme A biosynthesis; CoA from (R)-pantothenate: step 4/5. In terms of biological role, reversibly transfers an adenylyl group from ATP to 4'-phosphopantetheine, yielding dephospho-CoA (dPCoA) and pyrophosphate. This chain is Phosphopantetheine adenylyltransferase, found in Prosthecochloris aestuarii (strain DSM 271 / SK 413).